The primary structure comprises 248 residues: 2,3-bisphosphoglycerate-dependent phosphoglycerate mutase (248 aa).

Residues 8-15 (RHGESTWN), 21-22 (TG), Arg-60, 87-90 (ERHY), Lys-98, 114-115 (RR), and 183-184 (GN) contribute to the substrate site. Residue His-9 is the Tele-phosphohistidine intermediate of the active site. Glu-87 serves as the catalytic Proton donor/acceptor.

Belongs to the phosphoglycerate mutase family. BPG-dependent PGAM subfamily. In terms of assembly, homodimer.

The catalysed reaction is (2R)-2-phosphoglycerate = (2R)-3-phosphoglycerate. It participates in carbohydrate degradation; glycolysis; pyruvate from D-glyceraldehyde 3-phosphate: step 3/5. Catalyzes the interconversion of 2-phosphoglycerate and 3-phosphoglycerate. This Paraburkholderia phymatum (strain DSM 17167 / CIP 108236 / LMG 21445 / STM815) (Burkholderia phymatum) protein is 2,3-bisphosphoglycerate-dependent phosphoglycerate mutase.